A 254-amino-acid chain; its full sequence is Attacin-A (254 aa).

The signal sequence occupies residues 1-18 (MFTYKLILGLVLVVSASA). Residues 19–62 (RYLVFEDLEGESYLVPNQAEDEQVLEGEPFYENAVQLASPRVRR) constitute a propeptide that is removed on maturation.

It belongs to the attacin/sarcotoxin-2 family.

It localises to the secreted. Its function is as follows. Hemolymph antibacterial protein. In Trichoplusia ni (Cabbage looper), this protein is Attacin-A.